Here is a 713-residue protein sequence, read N- to C-terminus: MNPIVKSFQYGQHTVTLETGVMARQATAAVMVSMDDTCVFVTVVGKKEADHGRDFFPLTVNYQERTYAAGRIPGGFFRREGRPSEGETLTSRLIDRPIRPLFPEGFLNEVQVVATVMSVNPLVSPDIVAMIGASAALAISGIPFGGPIAAARVGYMNGQYVLNPTTAELPQSDLDLVVAGTANAVLMVESEAAILSEEVMLGAVVYGHEQMQVVINAINEFAADVGTQPWDWTPPATNEALKAKIAELATAELGEAYRITEKAVRYAAIGAIKQRVIEQVIAAGVEDDAKKIGEEFHSLESRIVRGRVVRGEPRIDGRDPEMIRALSVGTGILPRAHGSALFTRGETQAIVVATLGTERDAQNIDELAGHRADRFMLHYNFPPYCVGETGMMGSPKRREIGHGRLAKRGVAAVMPSAAEFPYVVRVVSEITESNGSSSMASVCGSSLALMDAGVPIKASVAGIAMGLVKEEEGFVVLSDILGDEDHLGDMDFKVAGTTQGITALQMDIKIEGITKEIMEIALKQARGARLHILKVMDEAIQAPRAEISDFAPRIHTIKINPEKIKDVIGKGGSVIRALTEETGTNIELDDDGTVRISAVANEAAMEAIRRIEAITAEIEVNRIYEGKVVRLADFGAFVNILPGKDGLVHISQITDARVQNVADFLKLGDVVKVKVLEVDRQGRVRLSIKEANAPTEAVAPAADVAAVEEPAAE.

2 residues coordinate Mg(2+): Asp-485 and Asp-491. The KH domain occupies 552 to 611 (PRIHTIKINPEKIKDVIGKGGSVIRALTEETGTNIELDDDGTVRISAVANEAAMEAIRRI). The S1 motif domain occupies 621–689 (NRIYEGKVVR…RQGRVRLSIK (69 aa)).

The protein belongs to the polyribonucleotide nucleotidyltransferase family. Component of the RNA degradosome, which is a multiprotein complex involved in RNA processing and mRNA degradation. Mg(2+) is required as a cofactor.

The protein localises to the cytoplasm. The enzyme catalyses RNA(n+1) + phosphate = RNA(n) + a ribonucleoside 5'-diphosphate. Functionally, involved in mRNA degradation. Catalyzes the phosphorolysis of single-stranded polyribonucleotides processively in the 3'- to 5'-direction. This is Polyribonucleotide nucleotidyltransferase from Aeromonas salmonicida (strain A449).